Consider the following 149-residue polypeptide: Pleckstrin homology domain-containing family J member 1 (149 aa).

Positions 15 to 108 (RAEKAAELSM…WVEALTNASY (94 aa)) constitute a PH domain.

The polypeptide is Pleckstrin homology domain-containing family J member 1 (plekhj1) (Xenopus tropicalis (Western clawed frog)).